Here is a 442-residue protein sequence, read N- to C-terminus: Trigger factor (442 aa).

One can recognise a PPIase FKBP-type domain in the interval 170 to 250 (GDIATVDYHE…LKALKQRQLP (81 aa)).

It belongs to the FKBP-type PPIase family. Tig subfamily.

Its subcellular location is the cytoplasm. It carries out the reaction [protein]-peptidylproline (omega=180) = [protein]-peptidylproline (omega=0). Functionally, involved in protein export. Acts as a chaperone by maintaining the newly synthesized protein in an open conformation. Functions as a peptidyl-prolyl cis-trans isomerase. The polypeptide is Trigger factor (tig) (Treponema pallidum (strain Nichols)).